A 537-amino-acid polypeptide reads, in one-letter code: Spore coat protein SP70 (537 aa).

Positions 1–20 (MRILKLAALSCLLFIAPSLS) are cleaved as a signal peptide. The DSCP-N domain occupies 21–140 (INCDGLSKDQ…CQIPATGGGP (120 aa)). N-linked (GlcNAc...) asparagine glycosylation is present at asparagine 97. A Follistatin-like 1 domain is found at 157 to 179 (SCDKVNCPNGYICTIVNQLAVCV). The disordered stretch occupies residues 183-246 (SSSSSSSSTT…GSHTTTGGST (64 aa)). 4 consecutive Follistatin-like domains span residues 250 to 272 (TCGNVNCPRGYHCEVRGSQAVCV), 278 to 296 (SCANVDCGSGYHCKNGECI), 358 to 380 (TCKTVQCPKGYKCKLYADGPTCV), and 389 to 415 (TCKDMHCESNGLLCVLTPQKKTDEECC).

In terms of processing, phosphorylated and fucosylated.

This chain is Spore coat protein SP70 (cotB), found in Dictyostelium discoideum (Social amoeba).